The chain runs to 96 residues: Nucleoid-associated protein CT_335 (96 aa).

This sequence belongs to the YbaB/EbfC family. As to quaternary structure, homodimer.

It is found in the cytoplasm. Its subcellular location is the nucleoid. Binds to DNA and alters its conformation. May be involved in regulation of gene expression, nucleoid organization and DNA protection. The polypeptide is Nucleoid-associated protein CT_335 (Chlamydia trachomatis serovar D (strain ATCC VR-885 / DSM 19411 / UW-3/Cx)).